Reading from the N-terminus, the 330-residue chain is Aquaporin Lacbi1:307192 (330 aa).

The Cytoplasmic portion of the chain corresponds to 1 to 40; it reads MSATPIIHLRDVKKRTGVLNAWERVRNKPQVHWAMECFAE. A helical membrane pass occupies residues 41 to 61; it reads ALGVFFYVYFGLGSTAAWVIG. Topologically, residues 62–71 are extracellular; sequence NILKQSGLSS. A helical transmembrane segment spans residues 72–92; sequence VFQIGFAYAFGILFAIGVCAA. The Cytoplasmic segment spans residues 93-124; it reads TSGGHFNPCVTIAFTIFRGFPPLKAVRYIVAQ. The short motif at 99 to 101 is the NPA 1 element; that stretch reads NPC. A helical membrane pass occupies residues 125 to 145; sequence ILGAYIASALVYNQWKVLIVE. At 146–157 the chain is on the extracellular side; it reads SELLLKQAGVYE. The helical transmembrane segment at 158–178 threads the bilayer; sequence TTMFTPNGPAGIFALYLLPGA. Topologically, residues 179-183 are cytoplasmic; that stretch reads QTLPR. The helical transmembrane segment at 184–204 threads the bilayer; sequence AFLNEFVNCFVLALVIWAALD. Topologically, residues 205–207 are extracellular; sequence PTS. The helical transmembrane segment at 208–228 threads the bilayer; that stretch reads FMIPPVMAPFIIAAAYAGSIW. Residues 229–264 are Cytoplasmic-facing; the sequence is GYAVPAISLNSARDIGCRLFALTIWGKSAAGGSYSA. Residues 238–240 carry the NPA 2 motif; the sequence is NSA. The helical transmembrane segment at 265 to 285 threads the bilayer; the sequence is ITALVNIPATLLAAVVYELFL. Residues 286-330 are Extracellular-facing; that stretch reads VDSDRVVAGSHLEFMNVAANHRRHRHQAEDDNHGDADDSSQEKPV. The tract at residues 308–330 is disordered; it reads RHRHQAEDDNHGDADDSSQEKPV. Residues 312-330 show a composition bias toward basic and acidic residues; sequence QAEDDNHGDADDSSQEKPV.

It belongs to the MIP/aquaporin (TC 1.A.8) family.

The protein resides in the membrane. Water channel-like protein that does not show transport of water nor ammonium across membranes. This chain is Aquaporin Lacbi1:307192, found in Laccaria bicolor (strain S238N-H82 / ATCC MYA-4686) (Bicoloured deceiver).